Here is a 349-residue protein sequence, read N- to C-terminus: MAVSATGFEGFEKRLEISFFETTDFLDPQGKSLRSLTKSQLDEILTPAECTIVSSLTNSFVDSYVLSESSLFVYPYKIIIKTCGTTKLLLSIPHILRLADSLCLTVKSVRYTRGSFIFPGAQSYPHRSFSEEVALLDDYFGKLNAGSKAFVMGGSDNNPQRWHVYSASSTEESAVCDKPVYTLEMCMTGLDNIKASVFFKTNSVSASEMTISSGIRNILPGSEICDFNFEPCGYSMNSIEGDAVSTIHVTPEDGFSYASFETVGYDLKALNFKELVDRVLVCFGPEEFSVAVHANLGTEVLASDCVADVNGYFSQERELEELGLGGSVLYQRFVKTVECCSPKSTLGFC.

Active-site residues include Glu-9 and Glu-12. Substrate is bound at residue Glu-68. The active-site Schiff-base intermediate with substrate; via pyruvic acid is Ser-69. Ser-69 carries the post-translational modification Pyruvic acid (Ser); by autocatalysis. The Proton donor; for catalytic activity role is filled by Cys-83. Active-site proton acceptor; for processing activity residues include Ser-235 and His-248. Residue Glu-252 coordinates substrate.

The protein belongs to the eukaryotic AdoMetDC family. Requires pyruvate as cofactor. Is synthesized initially as an inactive proenzyme. Formation of the active enzyme involves a self-maturation process in which the active site pyruvoyl group is generated from an internal serine residue via an autocatalytic post-translational modification. Two non-identical subunits are generated from the proenzyme in this reaction, and the pyruvate is formed at the N-terminus of the alpha chain, which is derived from the carboxyl end of the proenzyme. The post-translation cleavage follows an unusual pathway, termed non-hydrolytic serinolysis, in which the side chain hydroxyl group of the serine supplies its oxygen atom to form the C-terminus of the beta chain, while the remainder of the serine residue undergoes an oxidative deamination to produce ammonia and the pyruvoyl group blocking the N-terminus of the alpha chain.

The enzyme catalyses S-adenosyl-L-methionine + H(+) = S-adenosyl 3-(methylsulfanyl)propylamine + CO2. It participates in amine and polyamine biosynthesis; S-adenosylmethioninamine biosynthesis; S-adenosylmethioninamine from S-adenosyl-L-methionine: step 1/1. Functionally, essential for biosynthesis of the polyamines spermidine and spermine. Essential for polyamine homeostasis, and normal plant embryogenesis, growth and development. The polypeptide is S-adenosylmethionine decarboxylase proenzyme 3 (Arabidopsis thaliana (Mouse-ear cress)).